We begin with the raw amino-acid sequence, 238 residues long: Monocyte to macrophage differentiation factor (238 aa).

At 1 to 28 (MRFKNRFQRFMNHRAPANGRYKPTCYEH) the chain is on the cytoplasmic side. The chain crosses the membrane as a helical span at residues 29 to 49 (AANCYTHAFLIVPAIVGSALL). The Lumenal portion of the chain corresponds to 50–61 (HRLSDDCWEKIT). Residues 62 to 82 (AWIYGMGLCALFIVSTVFHIV) form a helical membrane-spanning segment. Residues 83 to 101 (SWKKSHLRTVEHCFHMCDR) lie on the Cytoplasmic side of the membrane. Residues 102 to 122 (MVIYFFIAASYAPWLNLRELG) traverse the membrane as a helical segment. Residues 123-124 (PL) lie on the Lumenal side of the membrane. A helical transmembrane segment spans residues 125–145 (ASHMRWFIWLMAAGGTIYVFL). Topologically, residues 146–151 (YHEKYK) are cytoplasmic. The chain crosses the membrane as a helical span at residues 152-172 (VVELFFYLTMGFSPALVVTSM). Topologically, residues 173-174 (NN) are lumenal. The chain crosses the membrane as a helical span at residues 175-195 (TDGLQELACGGLIYCLGVVFF). Topologically, residues 196–198 (KSD) are cytoplasmic. The chain crosses the membrane as a helical span at residues 199-219 (GIIPFAHAIWHLFVATAAAVH). Over 220–238 (YYAIWKYLYRSPTDFMRHL) the chain is Lumenal.

This sequence belongs to the ADIPOR family. As to expression, exhibits relatively ubiquitous expression with preferential expression in mature (in vitro differentiated) macrophages.

It is found in the late endosome membrane. The protein resides in the lysosome membrane. Its function is as follows. Involved in the dynamics of lysosomal membranes associated with microglial activation following brain lesion. This chain is Monocyte to macrophage differentiation factor, found in Homo sapiens (Human).